Consider the following 379-residue polypeptide: Deoxyuridine 5'-triphosphate nucleotidohydrolase (379 aa).

Belongs to the dUTPase family. Requires Mg(2+) as cofactor.

It catalyses the reaction dUTP + H2O = dUMP + diphosphate + H(+). In terms of biological role, involved in nucleotide metabolism: produces dUMP, the immediate precursor of thymidine nucleotides and decreases the intracellular concentration of dUTP to avoid uracil incorporation into viral DNA. The protein is Deoxyuridine 5'-triphosphate nucleotidohydrolase of Human herpesvirus 7 (strain JI) (HHV-7).